The primary structure comprises 294 residues: ATP synthase gamma chain (294 aa).

It belongs to the ATPase gamma chain family. As to quaternary structure, F-type ATPases have 2 components, CF(1) - the catalytic core - and CF(0) - the membrane proton channel. CF(1) has five subunits: alpha(3), beta(3), gamma(1), delta(1), epsilon(1). CF(0) has three main subunits: a, b and c.

The protein localises to the cell inner membrane. In terms of biological role, produces ATP from ADP in the presence of a proton gradient across the membrane. The gamma chain is believed to be important in regulating ATPase activity and the flow of protons through the CF(0) complex. The protein is ATP synthase gamma chain of Caulobacter sp. (strain K31).